Consider the following 200-residue polypeptide: Trem-like transcript 4 protein (200 aa).

The signal sequence occupies residues 1–25; the sequence is MAWGGVHTCCFHLCCCCSWPQGAVP. Positions 26-126 constitute an Ig-like V-type domain; the sequence is EELHKHPGQT…NIITVLRNIS (101 aa). Cys40 and Cys109 are disulfide-bonded. An N-linked (GlcNAc...) asparagine glycan is attached at Asn93.

It is found in the secreted. Its function is as follows. Positively regulates Toll-like receptor TLR7 signaling in macrophages. In Homo sapiens (Human), this protein is Trem-like transcript 4 protein (TREML4).